Consider the following 183-residue polypeptide: Large ribosomal subunit protein bL17 (183 aa).

Positions 130-150 are enriched in basic and acidic residues; sequence GTKFAKDEKAKAEATEAKAEE. Residues 130-183 are disordered; sequence GTKFAKDEKAKAEATEAKAEETTETTESTEAESTEAPAEEAKAEDTAAEKKDES. The segment covering 151 to 162 has biased composition (acidic residues); that stretch reads TTETTESTEAES. The segment covering 168–183 has biased composition (basic and acidic residues); the sequence is EEAKAEDTAAEKKDES.

The protein belongs to the bacterial ribosomal protein bL17 family. As to quaternary structure, part of the 50S ribosomal subunit. Contacts protein L32.

This Saccharopolyspora erythraea (strain ATCC 11635 / DSM 40517 / JCM 4748 / NBRC 13426 / NCIMB 8594 / NRRL 2338) protein is Large ribosomal subunit protein bL17.